We begin with the raw amino-acid sequence, 736 residues long: Melanotransferrin (736 aa).

Residues 1–19 (MRCRSAAMWIFLALRTALG) form the signal peptide. Transferrin-like domains follow at residues 23 to 357 (VRWC…GLLC) and 366 to 706 (LRWC…GMQS). 2 disulfide bridges follow: Cys-26–Cys-63 and Cys-36–Cys-54. Residues Asp-78 and Tyr-107 each coordinate Fe(3+). A glycan (N-linked (GlcNAc...) asparagine) is linked at Asn-118. Disulfide bonds link Cys-130–Cys-216, Cys-172–Cys-189, Cys-186–Cys-199, and Cys-257–Cys-271. Thr-132 serves as a coordination point for hydrogencarbonate. N-linked (GlcNAc...) asparagine glycosylation occurs at Asn-135. Positions 136, 138, and 139 each coordinate hydrogencarbonate. Tyr-210 lines the Fe(3+) pocket. 2 residues coordinate Fe(3+): His-279 and Tyr-451. N-linked (GlcNAc...) asparagine glycosylation occurs at Asn-515. Fe(3+) is bound at residue His-625. Gly-711 carries the GPI-anchor amidated glycine lipid modification. A propeptide spans 712-736 (AAVGAPGASLLPLLPLAVGLLLSSL) (removed in mature form).

Belongs to the transferrin family.

It is found in the cell membrane. Functionally, involved in iron cellular uptake. Seems to be internalized and then recycled back to the cell membrane. Binds a single atom of iron per subunit. Could also bind zinc. In Oryctolagus cuniculus (Rabbit), this protein is Melanotransferrin.